A 50-amino-acid chain; its full sequence is Phospholipase A2 trimorphin (50 aa).

The Ca(2+) site is built by Tyr28, Gly30, and Gly32. An intrachain disulfide couples Cys29 to Cys45. Residue His48 is part of the active site. Asp49 lines the Ca(2+) pocket.

It depends on Ca(2+) as a cofactor. Expressed by the venom gland.

It localises to the secreted. It carries out the reaction a 1,2-diacyl-sn-glycero-3-phosphocholine + H2O = a 1-acyl-sn-glycero-3-phosphocholine + a fatty acid + H(+). Its activity is regulated as follows. Inhibited by EDTA. Functionally, PLA2 catalyzes the calcium-dependent hydrolysis of the 2-acyl groups in 3-sn-phosphoglycerides. This is Phospholipase A2 trimorphin from Trimorphodon lambda (Sonoran lyre snake).